A 222-amino-acid polypeptide reads, in one-letter code: Peptide methionine sulfoxide reductase MsrA (222 aa).

Cys-60 is an active-site residue.

It belongs to the MsrA Met sulfoxide reductase family.

It catalyses the reaction L-methionyl-[protein] + [thioredoxin]-disulfide + H2O = L-methionyl-(S)-S-oxide-[protein] + [thioredoxin]-dithiol. The catalysed reaction is [thioredoxin]-disulfide + L-methionine + H2O = L-methionine (S)-S-oxide + [thioredoxin]-dithiol. In terms of biological role, has an important function as a repair enzyme for proteins that have been inactivated by oxidation. Catalyzes the reversible oxidation-reduction of methionine sulfoxide in proteins to methionine. The polypeptide is Peptide methionine sulfoxide reductase MsrA (Pseudomonas putida (strain W619)).